We begin with the raw amino-acid sequence, 298 residues long: Dihydrodipicolinate reductase-like protein CRR1, chloroplastic (298 aa).

Residues 1 to 25 constitute a chloroplast transit peptide; it reads MAAVNCHFFQLSRHLKPSRPSFSCS. 160–163 contributes to the NAD(+) binding site; that stretch reads APTL.

This sequence belongs to the DapB family. As to expression, expressed specifically in leaves.

The protein resides in the plastid. The protein localises to the chloroplast stroma. In terms of biological role, dihydrodipicolinate reductase (DHPR)-like protein that may not function as DHPR in lysine biosynthesis. Required for both formation and activity of the chloroplast NAD(P)H dehydrogenase (NDH) complex of the photosynthetic electron transport chain. May function in assembly or stabilization of the NDH complex. The polypeptide is Dihydrodipicolinate reductase-like protein CRR1, chloroplastic (Arabidopsis thaliana (Mouse-ear cress)).